We begin with the raw amino-acid sequence, 136 residues long: Mite allergen Der f 21.0101 (136 aa).

The N-terminal stretch at 1 to 17 (MKFIIFCAIVMAVSVSG) is a signal peptide.

The protein belongs to the mite group 5 allergen family. Monomer. Homodimer. As to expression, highly expressed in foregut (stomach), midgut and hindgut. Not expressed in body wall, reproductive system or body cavity.

This Dermatophagoides farinae (American house dust mite) protein is Mite allergen Der f 21.0101.